Reading from the N-terminus, the 293-residue chain is Nucleotide-binding protein Csac_1160 (293 aa).

An ATP-binding site is contributed by 11–18 (GMSGAGKS). 62 to 65 (DIRG) provides a ligand contact to GTP.

Belongs to the RapZ-like family.

Its function is as follows. Displays ATPase and GTPase activities. This is Nucleotide-binding protein Csac_1160 from Caldicellulosiruptor saccharolyticus (strain ATCC 43494 / DSM 8903 / Tp8T 6331).